We begin with the raw amino-acid sequence, 511 residues long: Apolipoprotein N-acyltransferase (511 aa).

Helical transmembrane passes span 7 to 29 (PGWP…LAPF), 58 to 78 (GWWY…VSIH), 90 to 110 (LLML…AWLW), 125 to 145 (LAFA…LTGF), 163 to 183 (VPVG…ALLV), and 192 to 212 (GASL…GLYL). In terms of domain architecture, CN hydrolase spans 230 to 470 (IQGNIAQELK…QGILRGEVIP (241 aa)). E269 (proton acceptor) is an active-site residue. Residue K330 is part of the active site. C382 serves as the catalytic Nucleophile. Residues 482–502 (VWPLAGLAGVLLLWALLGRQL) form a helical membrane-spanning segment.

This sequence belongs to the CN hydrolase family. Apolipoprotein N-acyltransferase subfamily.

Its subcellular location is the cell inner membrane. The enzyme catalyses N-terminal S-1,2-diacyl-sn-glyceryl-L-cysteinyl-[lipoprotein] + a glycerophospholipid = N-acyl-S-1,2-diacyl-sn-glyceryl-L-cysteinyl-[lipoprotein] + a 2-acyl-sn-glycero-3-phospholipid + H(+). The protein operates within protein modification; lipoprotein biosynthesis (N-acyl transfer). Functionally, catalyzes the phospholipid dependent N-acylation of the N-terminal cysteine of apolipoprotein, the last step in lipoprotein maturation. This chain is Apolipoprotein N-acyltransferase, found in Pseudomonas aeruginosa (strain ATCC 15692 / DSM 22644 / CIP 104116 / JCM 14847 / LMG 12228 / 1C / PRS 101 / PAO1).